A 76-amino-acid polypeptide reads, in one-letter code: Small ribosomal subunit protein eS17 (76 aa).

It belongs to the eukaryotic ribosomal protein eS17 family.

The protein is Small ribosomal subunit protein eS17 of Metallosphaera sedula (strain ATCC 51363 / DSM 5348 / JCM 9185 / NBRC 15509 / TH2).